The chain runs to 231 residues: Probable glutathione S-transferase GSTU1 (231 aa).

A GST N-terminal domain is found at 5–84 (KELVLLDFWV…YLDDAFPGTP (80 aa)). Glutathione contacts are provided by residues Ser-15, Lys-42, Ile-56, and 68–69 (ES). Residues 97 to 220 (AAYARATARF…LPSPEKVYDF (124 aa)) form the GST C-terminal domain.

It belongs to the GST superfamily. Tau family.

The enzyme catalyses RX + glutathione = an S-substituted glutathione + a halide anion + H(+). Conjugation of reduced glutathione to a wide number of exogenous and endogenous hydrophobic electrophiles. This chain is Probable glutathione S-transferase GSTU1 (GSTU1), found in Oryza sativa subsp. indica (Rice).